Here is a 346-residue protein sequence, read N- to C-terminus: Phenylalanine--tRNA ligase alpha subunit (346 aa).

Mg(2+) is bound at residue Glu262.

The protein belongs to the class-II aminoacyl-tRNA synthetase family. Phe-tRNA synthetase alpha subunit type 1 subfamily. Tetramer of two alpha and two beta subunits. Mg(2+) serves as cofactor.

The protein localises to the cytoplasm. It carries out the reaction tRNA(Phe) + L-phenylalanine + ATP = L-phenylalanyl-tRNA(Phe) + AMP + diphosphate + H(+). This chain is Phenylalanine--tRNA ligase alpha subunit, found in Ehrlichia chaffeensis (strain ATCC CRL-10679 / Arkansas).